The chain runs to 353 residues: Immune-associated nucleotide-binding protein 8 (353 aa).

A compositionally biased stretch (polar residues) spans 1-10; it reads MANDQKNSES. Positions 1-43 are disordered; the sequence is MANDQKNSESFPAKEDHKKDDAAAPAEVDHKDEFSASQPHPVE. Basic and acidic residues predominate over residues 12–34; sequence PAKEDHKKDDAAAPAEVDHKDEF. The AIG1-type G domain maps to 40 to 248; sequence HPVENIVLVG…YTDEMYHMIK (209 aa). A G1 region spans residues 49 to 56; it reads GRTGNGKS. GTP is bound by residues 49-57 and Ser-70; that span reads GRTGNGKSA. A G2 region spans residues 76 to 80; the sequence is GVTME. A G3 region spans residues 98 to 101; the sequence is DTPG. The G4 stretch occupies residues 168-171; sequence TGGD. The segment at 207–209 is G5; sequence DNK. Asn-208 provides a ligand contact to GTP. Residues 244–291 adopt a coiled-coil conformation; that stretch reads YHMIKEENERHKKEQEELESKGHSEEQLAALMKELQIMNERNLKAMAE.

This sequence belongs to the TRAFAC class TrmE-Era-EngA-EngB-Septin-like GTPase superfamily. AIG1/Toc34/Toc159-like paraseptin GTPase family. IAN subfamily. Mainly expressed in leaves.

The polypeptide is Immune-associated nucleotide-binding protein 8 (Arabidopsis thaliana (Mouse-ear cress)).